Reading from the N-terminus, the 234-residue chain is Thiamine import ATP-binding protein ThiQ (234 aa).

Residues 2 to 230 (LTLQQVHYYY…HSHPELVEFF (229 aa)) form the ABC transporter domain. 32–39 (GPSGAGKS) is a binding site for ATP.

This sequence belongs to the ABC transporter superfamily. Thiamine importer (TC 3.A.1.19.1) family. As to quaternary structure, the complex is composed of two ATP-binding proteins (ThiQ), two transmembrane proteins (ThiP) and a solute-binding protein (ThiB).

Its subcellular location is the cell inner membrane. The enzyme catalyses thiamine(out) + ATP + H2O = thiamine(in) + ADP + phosphate + H(+). Part of the ABC transporter complex ThiBPQ involved in thiamine import. Responsible for energy coupling to the transport system. This chain is Thiamine import ATP-binding protein ThiQ, found in Vibrio vulnificus (strain CMCP6).